The sequence spans 537 residues: ATP synthase subunit alpha (537 aa).

171-178 (GDRQTGKT) is a binding site for ATP.

This sequence belongs to the ATPase alpha/beta chains family. As to quaternary structure, F-type ATPases have 2 components, CF(1) - the catalytic core - and CF(0) - the membrane proton channel. CF(1) has five subunits: alpha(3), beta(3), gamma(1), delta(1), epsilon(1). CF(0) has four main subunits: a, b, b' and c.

The protein resides in the cell inner membrane. It catalyses the reaction ATP + H2O + 4 H(+)(in) = ADP + phosphate + 5 H(+)(out). In terms of biological role, produces ATP from ADP in the presence of a proton gradient across the membrane. The alpha chain is a regulatory subunit. The sequence is that of ATP synthase subunit alpha from Chloroherpeton thalassium (strain ATCC 35110 / GB-78).